Here is a 66-residue protein sequence, read N- to C-terminus: Toxin BomPI (66 aa).

Residues 2–64 (RDAYIAQPEN…VPIRIEGKCH (63 aa)) enclose the LCN-type CS-alpha/beta domain. Disulfide bonds link C12–C63, C16–C36, C22–C46, and C26–C48.

Belongs to the long (4 C-C) scorpion toxin superfamily. Sodium channel inhibitor family. Alpha subfamily. As to expression, expressed by the venom gland.

The protein resides in the secreted. Its function is as follows. Alpha toxins bind voltage-independently at site-3 of sodium channels (Nav) and inhibit the inactivation of the activated channels, thereby blocking neuronal transmission. This is Toxin BomPI from Buthus occitanus mardochei (Moroccan scorpion).